A 197-amino-acid chain; its full sequence is Imidazoleglycerol-phosphate dehydratase (197 aa).

This sequence belongs to the imidazoleglycerol-phosphate dehydratase family.

The protein localises to the cytoplasm. The catalysed reaction is D-erythro-1-(imidazol-4-yl)glycerol 3-phosphate = 3-(imidazol-4-yl)-2-oxopropyl phosphate + H2O. Its pathway is amino-acid biosynthesis; L-histidine biosynthesis; L-histidine from 5-phospho-alpha-D-ribose 1-diphosphate: step 6/9. In Nitrosococcus oceani (strain ATCC 19707 / BCRC 17464 / JCM 30415 / NCIMB 11848 / C-107), this protein is Imidazoleglycerol-phosphate dehydratase.